Consider the following 485-residue polypeptide: UDP-N-acetylmuramate--L-alanine ligase (485 aa).

Residue 112–118 (GTHGKTT) coordinates ATP.

It belongs to the MurCDEF family.

The protein resides in the cytoplasm. It catalyses the reaction UDP-N-acetyl-alpha-D-muramate + L-alanine + ATP = UDP-N-acetyl-alpha-D-muramoyl-L-alanine + ADP + phosphate + H(+). It participates in cell wall biogenesis; peptidoglycan biosynthesis. In terms of biological role, cell wall formation. The sequence is that of UDP-N-acetylmuramate--L-alanine ligase from Variovorax paradoxus (strain S110).